Reading from the N-terminus, the 291-residue chain is Phycobilisome 32.1 kDa linker polypeptide, phycocyanin-associated, rod 1 (291 aa).

One can recognise a PBS-linker domain in the interval 2 to 179; it reads AITTAASRLG…LYRGYANSDR (178 aa). A CpcD-like domain is found at 236–288; it reads SKLFRVEITAISAPGYPKVRRSNKAVIVPFEQLNQTLQQINRLGGKVASITPA.

Belongs to the phycobilisome linker protein family. Part of 2 PBS rod complexes, the conventional CpcG-PBS rod and a photosystem I-specific CpcL-PBS rod, both of which include ferredoxin--NADP reductase (petH). CpcG-PBS has on average 3 stacked phycocyanin hexamers (PC, CpcA and CpcB). Linker CpcG connects the PC stack to the thylakoid, the hexamers are linked by 1 copy of CpcC1, 1 copy of CpcC2 and the stack is terminated by a single copy of CpcD. The CpcL-PBS has on average 5 stacked phycocyanin hexamers (PC, CpcA and CpcB). Linker CpcL connects the PC stack to the thylakoid, the hexamers are linked by 1 copy of CpcC1, 3 copies of CpcC2 and the stack is terminated by a single copy of CpcD.

It localises to the cellular thylakoid membrane. Rod linker protein, connecting hexameric phycocyanin (PC, made by cpcA and cpcB) rods in the phycobilisome (PBS). PC is the major phycobiliprotein in PBS rods. Linker polypeptides determine the state of aggregation and the location of the disk-shaped phycobiliprotein units within the phycobilisome and modulate their spectroscopic properties in order to mediate a directed and optimal energy transfer. This is Phycobilisome 32.1 kDa linker polypeptide, phycocyanin-associated, rod 1 (cpcC1) from Synechocystis sp. (strain ATCC 27184 / PCC 6803 / Kazusa).